A 182-amino-acid chain; its full sequence is Adenine phosphoribosyltransferase (182 aa).

It belongs to the purine/pyrimidine phosphoribosyltransferase family. Homodimer.

The protein localises to the cytoplasm. The catalysed reaction is AMP + diphosphate = 5-phospho-alpha-D-ribose 1-diphosphate + adenine. Its pathway is purine metabolism; AMP biosynthesis via salvage pathway; AMP from adenine: step 1/1. In terms of biological role, catalyzes a salvage reaction resulting in the formation of AMP, that is energically less costly than de novo synthesis. This chain is Adenine phosphoribosyltransferase, found in Bordetella pertussis (strain Tohama I / ATCC BAA-589 / NCTC 13251).